The chain runs to 116 residues: Ly-6/neurotoxin-like protein 1 (116 aa).

An N-terminal signal peptide occupies residues 1-20 (MTHLLTVFLVALMGLPVAQA). In terms of domain architecture, UPAR/Ly6 spans 21 to 104 (LECHVCAYNG…GFATPVTLAL (84 aa)). 5 cysteine pairs are disulfide-bonded: C23–C46, C26–C33, C39–C64, C68–C85, and C86–C91. The GPI-anchor amidated asparagine moiety is linked to residue N92. The propeptide at 93–116 (GAGFATPVTLALVPALLATFWSLL) is removed in mature form.

Interacts with nAChRs containing alpha-4:beta-2 (CHRNA4:CHRNB2) and alpha-7 (CHRNA7) subunits. Interacts with CHRNA4 probably in the endoplasmic reticulum prior to nAChR pentameric assembly. Interacts with KCNA2/Potassium voltage-gated channel subfamily A member 2. As to expression, expressed in neurons of multiple regions in the CNS, including the cerebral cortex, thalamus, substantia nigra, cerebellum, amygdala and hippocampus. Also expressed in kidney, heart and thymus, but at lower levels than in the brain. Expressed in the primary visual cortex (V1) and the lateral geniculate nucleus (at protein level).

The protein resides in the cell membrane. The protein localises to the cell projection. Its subcellular location is the dendrite. It is found in the endoplasmic reticulum. Functionally, acts in different tissues through interaction to nicotinic acetylcholine receptors (nAChRs). The proposed role as modulator of nAChR activity seems to be dependent on the nAChR subtype and stoichiometry, and to involve an effect on nAChR trafficking and its cell surface expression, and on single channel properties of the nAChR inserted in the plasma membrane. Modulates functional properties of nicotinic acetylcholine receptors (nAChRs) to prevent excessive excitation, and hence neurodegeneration. Enhances desensitization by increasing both the rate and extent of desensitization of alpha-4:beta-2-containing nAChRs and slowing recovery from desensitization. Promotes large amplitude ACh-evoked currents through alpha-4:beta-2 nAChRs. Is involved in regulation of the nAChR pentameric assembly in the endoplasmic reticulum. Shifts stoichiometry from high sensitivity alpha-4(2):beta-2(3) to low sensitivity alpha-4(3):beta-2(2) nAChR. In vitro modulates alpha-3:beta-4-containing nAChRs. Reduces cell surface expression of (alpha-3:beta-4)(2):beta-4 and (alpha-3:beta-4)(2):alpha-5 nAChRs suggesting an interaction with nAChR alpha-3(-):(+)beta-4 subunit interfaces and an allosteric mode. Corresponding single channel effects characterized by decreased unitary conductance, altered burst proportions and enhanced desensitization/inactivation seem to depend on nAChR alpha:alpha subunit interfaces and are greater in (alpha-3:beta-2)(2):alpha-3 when compared to (alpha-3:beta-2)(2):alpha-5 nAChRs. Prevents plasticity in the primary visual cortex late in life. The protein is Ly-6/neurotoxin-like protein 1 of Mus musculus (Mouse).